Reading from the N-terminus, the 158-residue chain is Immunoglobulin J chain (158 aa).

The signal sequence occupies residues Met1–Ala22. 3 disulfides stabilise this stretch: Cys36–Cys122, Cys95–Cys115, and Cys130–Cys155. N-linked (GlcNAc...) (complex) asparagine glycosylation occurs at Asn72.

In terms of assembly, part of the secretory IgA (sIgA) complex that consists of two, four or five IgA monomers, and two additional non-Ig polypeptides, namely the JCHAIN and the secretory component (the proteolytic product of PIGR). Part of the secretory IgM (sIgM) complex that consist of five IgM monomers, and two additional non-Ig polypeptides, namely the JCHAIN and the secretory component (the proteolytic product of PIGR). JCHAIN-containing IgM interacts (via CH4 domain) with FCRM (via Ig-like domain). N-glycosylated. N-glycans attached to Asn-72 varies from truncated, differentially fucosylated to sialylated (NeuGc) complex types: Man3GlcNAc2; GlcNAc2Man3GlcNAc2(Fuc); Gal1GlcNAc1Man3GlcNAc2; GlcNAc2Man3GlcNAc2; GlcNAc1Man3GlcNAc2; GlcNAc1Man2GlcNAc2 and NeuGc1Gal1GlcNAc2Man3GlcNAc2.

The protein localises to the secreted. Its function is as follows. Serves to link two monomer units of either IgM or IgA. In the case of IgM, the J chain-joined dimer is a nucleating unit for the IgM pentamer, and in the case of IgA it induces dimers and/or larger polymers. It also helps to bind these immunoglobulins to secretory component. In Equus asinus (Donkey), this protein is Immunoglobulin J chain (JCHAIN).